Consider the following 371-residue polypeptide: tRNA-specific 2-thiouridylase MnmA (371 aa).

ATP is bound by residues 14-21 (GMSGGVDS) and Met-40. Residues 100 to 102 (NPD) form an interaction with target base in tRNA region. Cys-105 serves as the catalytic Nucleophile. Cys-105 and Cys-205 form a disulfide bridge. Gly-129 is an ATP binding site. Residues 155–157 (KDQ) form an interaction with tRNA region. Catalysis depends on Cys-205, which acts as the Cysteine persulfide intermediate. Residues 321–322 (RY) are interaction with tRNA.

It belongs to the MnmA/TRMU family.

Its subcellular location is the cytoplasm. It catalyses the reaction S-sulfanyl-L-cysteinyl-[protein] + uridine(34) in tRNA + AH2 + ATP = 2-thiouridine(34) in tRNA + L-cysteinyl-[protein] + A + AMP + diphosphate + H(+). In terms of biological role, catalyzes the 2-thiolation of uridine at the wobble position (U34) of tRNA, leading to the formation of s(2)U34. In Bordetella pertussis (strain Tohama I / ATCC BAA-589 / NCTC 13251), this protein is tRNA-specific 2-thiouridylase MnmA.